The following is a 603-amino-acid chain: Proline--tRNA ligase (603 aa).

The protein belongs to the class-II aminoacyl-tRNA synthetase family. ProS type 1 subfamily. In terms of assembly, homodimer.

The protein localises to the cytoplasm. It catalyses the reaction tRNA(Pro) + L-proline + ATP = L-prolyl-tRNA(Pro) + AMP + diphosphate. Functionally, catalyzes the attachment of proline to tRNA(Pro) in a two-step reaction: proline is first activated by ATP to form Pro-AMP and then transferred to the acceptor end of tRNA(Pro). As ProRS can inadvertently accommodate and process non-cognate amino acids such as alanine and cysteine, to avoid such errors it has two additional distinct editing activities against alanine. One activity is designated as 'pretransfer' editing and involves the tRNA(Pro)-independent hydrolysis of activated Ala-AMP. The other activity is designated 'posttransfer' editing and involves deacylation of mischarged Ala-tRNA(Pro). The misacylated Cys-tRNA(Pro) is not edited by ProRS. The chain is Proline--tRNA ligase from Prochlorococcus marinus (strain SARG / CCMP1375 / SS120).